A 478-amino-acid chain; its full sequence is Cytochrome c-552 (478 aa).

An N-terminal signal peptide occupies residues 1–26; the sequence is MARTILRARRFFSLILPFFFISSVYA. Heme c is bound at residue His-94. Residues Cys-122, Cys-125, and Lys-126 each coordinate heme. Heme c-binding residues include Cys-160, Cys-163, His-164, Cys-209, Cys-212, and His-213. Ca(2+) is bound by residues Glu-215, Tyr-216, Lys-261, and Gln-263. A substrate-binding site is contributed by Tyr-216. His-264 contributes to the substrate binding site. The heme c site is built by His-275, Cys-282, Cys-285, His-286, His-301, Cys-314, Cys-317, His-318, and His-393.

It belongs to the cytochrome c-552 family. Ca(2+) serves as cofactor. Requires heme c as cofactor.

The protein localises to the periplasm. It catalyses the reaction 6 Fe(III)-[cytochrome c] + NH4(+) + 2 H2O = 6 Fe(II)-[cytochrome c] + nitrite + 8 H(+). It functions in the pathway nitrogen metabolism; nitrate reduction (assimilation). Functionally, catalyzes the reduction of nitrite to ammonia, consuming six electrons in the process. The polypeptide is Cytochrome c-552 (Citrobacter koseri (strain ATCC BAA-895 / CDC 4225-83 / SGSC4696)).